The primary structure comprises 82 residues: RNA-binding protein Hfq (82 aa).

In terms of domain architecture, Sm spans 11-71 (DTFLNHVRKT…ISTIMPGAPI (61 aa)).

Belongs to the Hfq family. Homohexamer.

Functionally, RNA chaperone that binds small regulatory RNA (sRNAs) and mRNAs to facilitate mRNA translational regulation in response to envelope stress, environmental stress and changes in metabolite concentrations. Also binds with high specificity to tRNAs. The chain is RNA-binding protein Hfq from Bradyrhizobium sp. (strain BTAi1 / ATCC BAA-1182).